A 941-amino-acid chain; its full sequence is Bifunctional glutamine synthetase adenylyltransferase/adenylyl-removing enzyme (941 aa).

The segment at 1 to 431 (MSSAPPFAAA…TFRNAFRLAG (431 aa)) is adenylyl removase. The tract at residues 447 to 941 (NGHGMRPHAG…DGTIAQAEVK (495 aa)) is adenylyl transferase.

This sequence belongs to the GlnE family. Mg(2+) is required as a cofactor.

The catalysed reaction is [glutamine synthetase]-O(4)-(5'-adenylyl)-L-tyrosine + phosphate = [glutamine synthetase]-L-tyrosine + ADP. The enzyme catalyses [glutamine synthetase]-L-tyrosine + ATP = [glutamine synthetase]-O(4)-(5'-adenylyl)-L-tyrosine + diphosphate. Involved in the regulation of glutamine synthetase GlnA, a key enzyme in the process to assimilate ammonia. When cellular nitrogen levels are high, the C-terminal adenylyl transferase (AT) inactivates GlnA by covalent transfer of an adenylyl group from ATP to specific tyrosine residue of GlnA, thus reducing its activity. Conversely, when nitrogen levels are low, the N-terminal adenylyl removase (AR) activates GlnA by removing the adenylyl group by phosphorolysis, increasing its activity. The regulatory region of GlnE binds the signal transduction protein PII (GlnB) which indicates the nitrogen status of the cell. The protein is Bifunctional glutamine synthetase adenylyltransferase/adenylyl-removing enzyme of Bordetella bronchiseptica (strain ATCC BAA-588 / NCTC 13252 / RB50) (Alcaligenes bronchisepticus).